Here is a 536-residue protein sequence, read N- to C-terminus: uncharacterized protein (536 aa).

The Cytoplasmic portion of the chain corresponds to 1 to 8; sequence MVSIKRYE. The chain crosses the membrane as a helical span at residues 9–29; the sequence is IISFVIAAFFFLSGLSMWIAF. The Extracellular portion of the chain corresponds to 30 to 502; sequence WPIFNSELRS…VWLGVIIVPR (473 aa). 4 N-linked (GlcNAc...) asparagine glycosylation sites follow: asparagine 73, asparagine 236, asparagine 363, and asparagine 376. The chain crosses the membrane as a helical span at residues 503 to 523; that stretch reads IIEYLKFVLIFISICILTTLL. At 524–536 the chain is on the cytoplasmic side; that stretch reads VIRVRVKGTVSVV.

The protein belongs to the CD36 family.

It is found in the membrane. This is an uncharacterized protein from Caenorhabditis elegans.